A 272-amino-acid polypeptide reads, in one-letter code: Iodotyrosine deiodinase (272 aa).

A helical transmembrane segment spans residues Leu5–Tyr25. FMN-binding positions include Arg82–Arg86, Ser110, and Ser110–Gly111. 4 residues coordinate 3-iodo-L-tyrosine: Ala112, Glu139, Tyr143, and Lys164. FMN is bound by residues Thr219–Thr221 and Arg261.

Belongs to the nitroreductase family. FMN is required as a cofactor.

Its subcellular location is the membrane. It carries out the reaction 2 iodide + L-tyrosine + 2 NADP(+) = 3,5-diiodo-L-tyrosine + 2 NADPH + H(+). The catalysed reaction is iodide + L-tyrosine + NADP(+) = 3-iodo-L-tyrosine + NADPH. It catalyses the reaction 3-iodo-L-tyrosine + iodide + NADP(+) = 3,5-diiodo-L-tyrosine + NADPH + H(+). The enzyme catalyses L-tyrosine + chloride + NADP(+) = 3-chloro-L-tyrosine + NADPH. It carries out the reaction bromide + L-tyrosine + NADP(+) = 3-bromo-L-tyrosine + NADPH. Its function is as follows. Catalyzes the dehalogenation of halotyrosines such as 3,5-diiodo-L-tyrosine. Likely to also catalyze the dehalogenation of other halotyrosines such as 3-bromo-L-tyrosine, 3-chloro-L-tyrosine and 3-iodo-L-tyrosine. This Hydra vulgaris (Hydra) protein is Iodotyrosine deiodinase.